Reading from the N-terminus, the 350-residue chain is Phosphotriesterase-related protein (350 aa).

A divalent metal cation-binding residues include His22, His24, Glu169, His201, His230, and Asp298.

The protein belongs to the metallo-dependent hydrolases superfamily. Phosphotriesterase family. Requires a divalent metal cation as cofactor.

The protein is Phosphotriesterase-related protein of Drosophila willistoni (Fruit fly).